A 261-amino-acid polypeptide reads, in one-letter code: Kallikrein-2 (261 aa).

A signal peptide spans 1-18 (MWDLVLSIALSVGCTGAV). Positions 19-24 (PLIQSR) are cleaved as a propeptide — activation peptide. The Peptidase S1 domain maps to 25–258 (IVGGWECEKH…YRKWIKDTIA (234 aa)). Intrachain disulfides connect Cys-31/Cys-173, Cys-50/Cys-66, Cys-152/Cys-219, Cys-184/Cys-198, and Cys-209/Cys-234. The Charge relay system role is filled by His-65. Asn-102 carries N-linked (GlcNAc...) asparagine glycosylation. Asp-120 acts as the Charge relay system in catalysis. Ser-213 functions as the Charge relay system in the catalytic mechanism.

It belongs to the peptidase S1 family. Kallikrein subfamily.

It catalyses the reaction Preferential cleavage of Arg-|-Xaa bonds in small molecule substrates. Highly selective action to release kallidin (lysyl-bradykinin) from kininogen involves hydrolysis of Met-|-Xaa or Leu-|-Xaa.. In terms of biological role, glandular kallikreins cleave Met-Lys and Arg-Ser bonds in kininogen to release Lys-bradykinin. This chain is Kallikrein-2 (KLK2), found in Homo sapiens (Human).